A 299-amino-acid polypeptide reads, in one-letter code: Small ribosomal subunit biogenesis GTPase RsgA (299 aa).

The CP-type G domain maps to 73-232 (CSWLTRPQVA…VADTPGFNRP (160 aa)). GTP is bound by residues 122–125 (TKGD) and 174–182 (GPSGVGKSS). Zn(2+) is bound by residues Cys-257, Cys-262, His-264, and Cys-270.

The protein belongs to the TRAFAC class YlqF/YawG GTPase family. RsgA subfamily. In terms of assembly, monomer. Associates with 30S ribosomal subunit, binds 16S rRNA. Zn(2+) is required as a cofactor.

It is found in the cytoplasm. Functionally, one of several proteins that assist in the late maturation steps of the functional core of the 30S ribosomal subunit. Helps release RbfA from mature subunits. May play a role in the assembly of ribosomal proteins into the subunit. Circularly permuted GTPase that catalyzes slow GTP hydrolysis, GTPase activity is stimulated by the 30S ribosomal subunit. This is Small ribosomal subunit biogenesis GTPase RsgA from Parasynechococcus marenigrum (strain WH8102).